The primary structure comprises 234 residues: DEAD-box ATP-dependent RNA helicase 3 (234 aa).

Residues L120–R148 carry the Q motif motif. In terms of domain architecture, Helicase ATP-binding spans L151–S234. A164–T171 provides a ligand contact to ATP.

It belongs to the DEAD box helicase family. DDX21/DDX50 subfamily.

This chain is DEAD-box ATP-dependent RNA helicase 3, found in Helianthus annuus (Common sunflower).